Consider the following 228-residue polypeptide: Phosphatidate cytidylyltransferase (228 aa).

6 consecutive transmembrane segments (helical) span residues 31 to 51 (FVIAILCLKTLFYILMILVGL), 65 to 85 (INYLLIGLIIIPIPISLLIFL), 93 to 113 (LVIMLYFCILWSVDTFAMIGG), 131 to 151 (WTGLITGTVSAGLVSVLVSLI), 165 to 185 (IYLFIISCILALIAQSSDLFI), and 206 to 226 (GVLDRFDSIILTAPVFFCINI).

It belongs to the CDS family.

Its subcellular location is the cell membrane. It carries out the reaction a 1,2-diacyl-sn-glycero-3-phosphate + CTP + H(+) = a CDP-1,2-diacyl-sn-glycerol + diphosphate. It participates in phospholipid metabolism; CDP-diacylglycerol biosynthesis; CDP-diacylglycerol from sn-glycerol 3-phosphate: step 3/3. This Rickettsia prowazekii (strain Madrid E) protein is Phosphatidate cytidylyltransferase (cdsA).